The following is a 425-amino-acid chain: UDP-N-acetylglucosamine 1-carboxyvinyltransferase (425 aa).

Position 22–23 (22–23 (KN)) interacts with phosphoenolpyruvate. A UDP-N-acetyl-alpha-D-glucosamine-binding site is contributed by Arg98. Cys122 functions as the Proton donor in the catalytic mechanism. Residue Cys122 is modified to 2-(S-cysteinyl)pyruvic acid O-phosphothioketal. UDP-N-acetyl-alpha-D-glucosamine contacts are provided by residues 127–131 (RPVDQ), Asp313, and Ile335.

Belongs to the EPSP synthase family. MurA subfamily.

The protein localises to the cytoplasm. It carries out the reaction phosphoenolpyruvate + UDP-N-acetyl-alpha-D-glucosamine = UDP-N-acetyl-3-O-(1-carboxyvinyl)-alpha-D-glucosamine + phosphate. It functions in the pathway cell wall biogenesis; peptidoglycan biosynthesis. Its function is as follows. Cell wall formation. Adds enolpyruvyl to UDP-N-acetylglucosamine. The sequence is that of UDP-N-acetylglucosamine 1-carboxyvinyltransferase from Xylella fastidiosa (strain M12).